Reading from the N-terminus, the 169-residue chain is Chorion protein E1 (169 aa).

A signal peptide spans 1-19; it reads MAWFTTVLIVASLLGSLVA. Tetradecapeptide repeat units lie at residues 114 to 127 and 128 to 141; these read GAGR…KPRS and GAGK…KPKS. The disordered stretch occupies residues 119 to 169; that stretch reads AEMEGKPRSGAGKGAEMEGKPKSTESVAETNTVAAGTGVVAEKTGTESSAS. A compositionally biased stretch (polar residues) spans 142-152; that stretch reads TESVAETNTVA.

This protein is one of two components of the prominent 'filler' that helps mold the shape of aeropyle crowns. The protein is Chorion protein E1 of Antheraea polyphemus (Polyphemus moth).